A 241-amino-acid chain; its full sequence is MNKDTIFSAPIEKLGDFTFDESVAEVFPDMIQRSVPGYSNIITAIGMLAQRFVTEGSQVYDLGCSRGAGILSIRRNLQTNQVKIIGVDNSQPMVERCRSHINAYHSDVPVEILCDDIRHIEIKNASMVVLNFTLQFLPRADRLELLTKIYQGLNPNGILVLSEKFTFTNQAMSELLIDLHHTFKRANGYSELEVSQKRTALENVMLTDSIETHKDRLKQAGFSQIELWFQCFNFGSMIAVK.

S-adenosyl-L-methionine contacts are provided by residues Tyr38, Gly63–Ser65, Asp88–Asn89, Asp116–Ile117, Asn131, and Arg198.

Belongs to the class I-like SAM-binding methyltransferase superfamily. Cx-SAM synthase family. In terms of assembly, homodimer.

The enzyme catalyses prephenate + S-adenosyl-L-methionine = carboxy-S-adenosyl-L-methionine + 3-phenylpyruvate + H2O. In terms of biological role, catalyzes the conversion of S-adenosyl-L-methionine (SAM) to carboxy-S-adenosyl-L-methionine (Cx-SAM). The polypeptide is Carboxy-S-adenosyl-L-methionine synthase (Actinobacillus pleuropneumoniae serotype 7 (strain AP76)).